Consider the following 1295-residue polypeptide: Serine protease pet autotransporter (1295 aa).

The first 52 residues, Met-1–Ala-52, serve as a signal peptide directing secretion. The region spanning Asn-54–Glu-304 is the Peptidase S6 domain. Residues His-124, Asp-153, and Ser-260 each act as charge relay system in the active site. One can recognise an Autotransporter domain in the interval Asp-1029–Phe-1295.

Post-translationally, cleaved to release the mature protein from the outer membrane.

The protein resides in the periplasm. It localises to the secreted. Its subcellular location is the cell surface. It is found in the cell outer membrane. Inhibition of cytotoxic activity by phenylmethylsulfonyl fluoride. Its function is as follows. Serine protease with enterotoxic and cytotoxic activity. Internalization into the host cell is required for the induction of cytopathic effects. However, the serine activity is not necessary for secretion and internalization into the host cell. This Escherichia coli O44:H18 (strain 042 / EAEC) protein is Serine protease pet autotransporter (pet).